Consider the following 292-residue polypeptide: Nitrogenase iron protein (292 aa).

8–15 is a binding site for ATP; sequence GKGGIGKS. Residue Cys-96 coordinates [4Fe-4S] cluster. The residue at position 99 (Arg-99) is an ADP-ribosylarginine; by dinitrogenase reductase ADP-ribosyltransferase. Cys-130 lines the [4Fe-4S] cluster pocket.

This sequence belongs to the NifH/BchL/ChlL family. In terms of assembly, homodimer. [4Fe-4S] cluster is required as a cofactor. Post-translationally, the reversible ADP-ribosylation of Arg-99 inactivates the nitrogenase reductase and regulates nitrogenase activity.

The enzyme catalyses N2 + 8 reduced [2Fe-2S]-[ferredoxin] + 16 ATP + 16 H2O = H2 + 8 oxidized [2Fe-2S]-[ferredoxin] + 2 NH4(+) + 16 ADP + 16 phosphate + 6 H(+). In terms of biological role, the key enzymatic reactions in nitrogen fixation are catalyzed by the nitrogenase complex, which has 2 components: the iron protein and the molybdenum-iron protein. The polypeptide is Nitrogenase iron protein (Synechococcus sp. (strain JA-3-3Ab) (Cyanobacteria bacterium Yellowstone A-Prime)).